Reading from the N-terminus, the 210-residue chain is Phosphoenolpyruvate guanylyltransferase (210 aa).

T130, G146, and S149 together coordinate phosphoenolpyruvate.

The protein belongs to the CofC family.

It catalyses the reaction phosphoenolpyruvate + GTP + H(+) = enolpyruvoyl-2-diphospho-5'-guanosine + diphosphate. The protein operates within cofactor biosynthesis; coenzyme F420 biosynthesis. Guanylyltransferase that catalyzes the activation of phosphoenolpyruvate (PEP) as enolpyruvoyl-2-diphospho-5'-guanosine, via the condensation of PEP with GTP. It is involved in the biosynthesis of coenzyme F420, a hydride carrier cofactor. The polypeptide is Phosphoenolpyruvate guanylyltransferase (Roseiflexus castenholzii (strain DSM 13941 / HLO8)).